Here is a 630-residue protein sequence, read N- to C-terminus: tRNA uridine 5-carboxymethylaminomethyl modification enzyme MnmG (630 aa).

13-18 (GGGHAG) is a binding site for FAD. 273–287 (GPRYCPSIEDKVMRF) lines the NAD(+) pocket.

The protein belongs to the MnmG family. Homodimer. Heterotetramer of two MnmE and two MnmG subunits. It depends on FAD as a cofactor.

It is found in the cytoplasm. Its function is as follows. NAD-binding protein involved in the addition of a carboxymethylaminomethyl (cmnm) group at the wobble position (U34) of certain tRNAs, forming tRNA-cmnm(5)s(2)U34. This chain is tRNA uridine 5-carboxymethylaminomethyl modification enzyme MnmG, found in Actinobacillus pleuropneumoniae serotype 3 (strain JL03).